The chain runs to 377 residues: Homoserine O-succinyltransferase (377 aa).

The 309-residue stretch at 50–358 (NAVLICHALS…PSSYGHDSFL (309 aa)) folds into the AB hydrolase-1 domain. Ser-156 acts as the Nucleophile in catalysis. Arg-226 provides a ligand contact to substrate. Residues Asp-321 and His-354 contribute to the active site. Asp-355 contacts substrate.

It belongs to the AB hydrolase superfamily. MetX family. In terms of assembly, homodimer.

It localises to the cytoplasm. The catalysed reaction is L-homoserine + succinyl-CoA = O-succinyl-L-homoserine + CoA. Its pathway is amino-acid biosynthesis; L-methionine biosynthesis via de novo pathway; O-succinyl-L-homoserine from L-homoserine: step 1/1. Its function is as follows. Transfers a succinyl group from succinyl-CoA to L-homoserine, forming succinyl-L-homoserine. The chain is Homoserine O-succinyltransferase from Nitrosomonas europaea (strain ATCC 19718 / CIP 103999 / KCTC 2705 / NBRC 14298).